Reading from the N-terminus, the 262-residue chain is MAVGKNKRVSKGKKGAKKKVIDPFSRKEWYNLKAPVTFNVRNFGQTLVTKTVGTKLATDGLKGRVFEMSLADLNADEDQAYRKIKLSCEDVQGRNCLTDFHGTSVTRDKLCSLIRKNYSLIEAFADVKTLDGYNLRLFCVGYTKRRPGQLKSTCYVRTSKVRLIHKKMVSVMTNEASNSTLKELVKKVIPESIGKEIEKACKSIFPLQNVLVRKIKVLKKPKFDLTKLMESHNYSGDEEGRTLKVKESENATNLLTAELQSS.

It belongs to the eukaryotic ribosomal protein eS1 family. In terms of assembly, component of the small ribosomal subunit. Mature ribosomes consist of a small (40S) and a large (60S) subunit. The 40S subunit contains about 33 different proteins and 1 molecule of RNA (18S). The 60S subunit contains about 49 different proteins and 3 molecules of RNA (25S, 5.8S and 5S).

The protein resides in the cytoplasm. The sequence is that of Small ribosomal subunit protein eS1 from Theileria parva (East coast fever infection agent).